Here is a 401-residue protein sequence, read N- to C-terminus: MNNFKKVVLAYSGGLDTSAIIPWLKENYHVDVVAFVADIGQSKKDLNGIEKKALQSGAIDCRVFDLKEEFIKDYVYPVLKTGSLYEGNYLLGTAIARPIIAKKQVEFASSIGAKFLCHGATGKGNDQVRFEIAYAALAPYMKVIAPWREWNLNSRESLLEYLREKNIPTSATLEKIYSRDENSLHISTEGGLLEDLWNKPNADCWNWTVELEDAPEQPEYISLIVKNGSVVSVNNEFLTPLKCIEKLNKIGSKHAIGRIDIVENRLVGIKSRGCYETPGGTIMHIALRAIEQLVFDRESFKWREKIGLEMSSVVYDGRWFTPIRKSLQASADSLSSEVNGEVVLKLYKGSVIPVQKKSSNSLYSKEYATFGEDEVYKHSDAEGFIRLFSLSSRIRAQNKLK.

ATP contacts are provided by residues 10–18 (AYSGGLDTS) and A37. Y89 lines the L-citrulline pocket. ATP is bound at residue G119. Residues T121, N125, and D126 each contribute to the L-aspartate site. N125 contacts L-citrulline. L-citrulline-binding residues include R129, S178, S187, E263, and Y275.

The protein belongs to the argininosuccinate synthase family. Type 1 subfamily. Homotetramer.

Its subcellular location is the cytoplasm. It carries out the reaction L-citrulline + L-aspartate + ATP = 2-(N(omega)-L-arginino)succinate + AMP + diphosphate + H(+). The protein operates within amino-acid biosynthesis; L-arginine biosynthesis; L-arginine from L-ornithine and carbamoyl phosphate: step 2/3. The polypeptide is Argininosuccinate synthase (Buchnera aphidicola subsp. Schizaphis graminum (strain Sg)).